Here is a 573-residue protein sequence, read N- to C-terminus: Protein translocase subunit SecD (573 aa).

A helical membrane pass occupies residues 13 to 33 (YLSVFLVMLIGIYLLVFFTGD). Residues 127–200 (AQPAAEEPQP…PPAEAPATDP (74 aa)) are disordered. Composition is skewed to pro residues over residues 135-154 (QPAP…PPPA) and 161-194 (SPQP…PPAE). 5 helical membrane-spanning segments follow: residues 385-405 (AGMI…LLYY), 410-430 (LLTA…LVLL), 441-461 (AGIA…VVFF), 489-509 (IVSG…LAIG), and 514-534 (FAFT…LVTW).

Belongs to the SecD/SecF family. SecD subfamily. As to quaternary structure, forms a complex with SecF. Part of the essential Sec protein translocation apparatus which comprises SecA, SecYEG and auxiliary proteins SecDF. Other proteins may also be involved.

The protein localises to the cell membrane. Its function is as follows. Part of the Sec protein translocase complex. Interacts with the SecYEG preprotein conducting channel. SecDF uses the proton motive force (PMF) to complete protein translocation after the ATP-dependent function of SecA. In Mycobacterium tuberculosis (strain CDC 1551 / Oshkosh), this protein is Protein translocase subunit SecD.